The sequence spans 178 residues: GTP-dependent dephospho-CoA kinase (178 aa).

Residues D48, I49, D67, K69, and E126 each coordinate GTP.

It belongs to the GTP-dependent DPCK family.

The catalysed reaction is 3'-dephospho-CoA + GTP = GDP + CoA + H(+). It functions in the pathway cofactor biosynthesis; coenzyme A biosynthesis. Its function is as follows. Catalyzes the GTP-dependent phosphorylation of the 3'-hydroxyl group of dephosphocoenzyme A to form coenzyme A (CoA). This is GTP-dependent dephospho-CoA kinase from Methanothrix thermoacetophila (strain DSM 6194 / JCM 14653 / NBRC 101360 / PT) (Methanosaeta thermophila).